Here is an 85-residue protein sequence, read N- to C-terminus: Protein MC005 (85 aa).

In terms of assembly, interacts with host IKBKG; this interaction prevents NF-kappa-B activation.

It localises to the host cytoplasm. Its function is as follows. Plays a role in the inhibition of the host NF-kappa-B pathway by preventing ubiquitin binding-dependent regulation of host IKBKB activation by IKBKG/NEMO. The protein is Protein MC005 (MC005L) of Molluscum contagiosum virus subtype 1 (MOCV).